The chain runs to 136 residues: Keratin-associated protein 15-1 (136 aa).

It belongs to the PMG family. In terms of assembly, interacts with hair keratins.

Its function is as follows. In the hair cortex, hair keratin intermediate filaments are embedded in an interfilamentous matrix, consisting of hair keratin-associated proteins (KRTAP), which are essential for the formation of a rigid and resistant hair shaft through their extensive disulfide bond cross-linking with abundant cysteine residues of hair keratins. The matrix proteins include the high-sulfur and high-glycine-tyrosine keratins. The protein is Keratin-associated protein 15-1 (KRTAP15-1) of Capra hircus (Goat).